A 444-amino-acid polypeptide reads, in one-letter code: 23S rRNA (uracil(1939)-C(5))-methyltransferase RlmD (444 aa).

A TRAM domain is found at 5–67 (RNRFDRTPFQ…RHFDEAKTVE (63 aa)). Residues Cys-80, Cys-86, Cys-89, and Cys-168 each coordinate [4Fe-4S] cluster. Gln-276, Phe-305, Asn-310, Glu-326, Asp-353, and Asp-374 together coordinate S-adenosyl-L-methionine. Cys-400 (nucleophile) is an active-site residue.

This sequence belongs to the class I-like SAM-binding methyltransferase superfamily. RNA M5U methyltransferase family. RlmD subfamily.

The catalysed reaction is uridine(1939) in 23S rRNA + S-adenosyl-L-methionine = 5-methyluridine(1939) in 23S rRNA + S-adenosyl-L-homocysteine + H(+). Functionally, catalyzes the formation of 5-methyl-uridine at position 1939 (m5U1939) in 23S rRNA. In Xanthomonas oryzae pv. oryzae (strain KACC10331 / KXO85), this protein is 23S rRNA (uracil(1939)-C(5))-methyltransferase RlmD.